A 41-amino-acid chain; its full sequence is Large ribosomal subunit protein bL36 (41 aa).

Belongs to the bacterial ribosomal protein bL36 family.

The sequence is that of Large ribosomal subunit protein bL36 from Sphingopyxis alaskensis (strain DSM 13593 / LMG 18877 / RB2256) (Sphingomonas alaskensis).